Here is a 559-residue protein sequence, read N- to C-terminus: Formate--tetrahydrofolate ligase (559 aa).

68–75 (TPAGEGKT) provides a ligand contact to ATP.

Belongs to the formate--tetrahydrofolate ligase family. Homotetramer.

The catalysed reaction is (6S)-5,6,7,8-tetrahydrofolate + formate + ATP = (6R)-10-formyltetrahydrofolate + ADP + phosphate. Its pathway is one-carbon metabolism; tetrahydrofolate interconversion. The protein is Formate--tetrahydrofolate ligase of Moorella thermoacetica (Clostridium thermoaceticum).